The chain runs to 857 residues: ATP-dependent RNA helicase DDX24 (857 aa).

A disordered region spans residues 61 to 179 (NPSRLFSSEE…SPKLPKKSKK (119 aa)). Phosphoserine occurs at positions 80 and 92. Residues 152-161 (PRKKKNKGKK) show a composition bias toward basic residues. A Phosphoserine modification is found at Ser-170. The Q motif motif lies at 193–221 (SAWRDLFVPKAVLRALSFLGFSAPTPIQA). A Helicase ATP-binding domain is found at 225-528 (APAIRDKLDI…RILHKKHVKK (304 aa)). 238-245 (AETGSGKT) serves as a coordination point for ATP. The tract at residues 279-363 (RFGATAHLGS…NEDGEEKFDA (85 aa)) is disordered. Phosphoserine is present on residues Ser-288 and Ser-296. Basic and acidic residues predominate over residues 290–307 (CKDRTESGVLPEEARIET). The span at 309 to 330 (AQPSDSGVQATPETSASASAQT) shows a compositional bias: polar residues. The segment covering 345–363 (LEEKPVPKQNEDGEEKFDA) has biased composition (basic and acidic residues). Lys-370 participates in a covalent cross-link: Glycyl lysine isopeptide (Lys-Gly) (interchain with G-Cter in SUMO2). A DEAD box motif is present at residues 471 to 474 (DEAD). The Helicase C-terminal domain maps to 576-723 (DLYLYYFLMQ…LFPVQSKYMD (148 aa)). Lys-624 is covalently cross-linked (Glycyl lysine isopeptide (Lys-Gly) (interchain with G-Cter in SUMO2)). The segment at 808-857 (RYPTQSGRPPQPVLASRNIESALSCLSRQKRRRKKPKEPRAPPQPGSSTS) is disordered. The span at 825–834 (NIESALSCLS) shows a compositional bias: polar residues. Over residues 835–844 (RQKRRRKKPK) the composition is skewed to basic residues. Residues 848 to 857 (APPQPGSSTS) show a composition bias toward pro residues.

This sequence belongs to the DEAD box helicase family. DDX24/MAK5 subfamily. Interacts with FADD. Interacts with RIPK1; this interaction disrupts RLR signaling activation of IFN-dependent transcription factor IRF7. Interacts with NIP7. Interacts with EP300; this interaction prevents TP53 acetylation mediated by EP300. In terms of processing, ubiquitinated by MDM2 without targeting DDX24 for proteasomal degradation. Instead, polyubiquitylated DDX24 promotes interaction with NIP7, a component of pre-rRNP processing complex, and associates with pre-rRNA molecules and pre-ribosomal particles.

The protein localises to the cytoplasm. The protein resides in the nucleus. The catalysed reaction is ATP + H2O = ADP + phosphate + H(+). ATP-dependent RNA helicase that plays a role in various aspects of RNA metabolism including pre-mRNA splicing and is thereby involved in different biological processes such as cell cycle regulation or innate immunity. Plays an inhibitory role in TP53 transcriptional activity and subsequently in TP53 controlled cell growth arrest and senescence by inhibiting its EP300 mediated acetylation. Negatively regulates cytosolic RNA-mediated innate immune signaling at least in part by affecting RIPK1/IRF7 interactions. Alternatively, possesses antiviral activity by recognizing gammaherpesvirus transcripts in the context of lytic reactivation. Plays an essential role in cell cycle regulation in vascular smooth muscle cells by interacting with and regulating FANCA (Fanconi anemia complementation group A) mRNA. This Mus musculus (Mouse) protein is ATP-dependent RNA helicase DDX24 (Ddx24).